The sequence spans 433 residues: MTATWEKKEGNEGVLTVTVPAEKVNKALDQAFKKVVKQINVPGFRKGKVPRPIFEQRFGVEALYQDAVDILLPEAYGEAIEETEINPVAQPEVNVTQIEKGKDFIFEATVTVEPEVKLGDYKGLEIEKQETDLSDEELQESIDHSLSHLAEMVVKEDGAVENGDTVNIDFSGSVDGEEFDGGQAEGYDLEIGSGSFIPGFEEQIEGMKTGDEKDVVVTFPEEYHAEELAGKEATFKTKVNEIKFKDVPELNDEIANELDSDAENVDEYKENLRKRLSEQKATEAENTEKEEAINKATENASIDIPEAMINTELDRMIQEFGQRIQQQGLDLQTYYQISGQNEEQLRDQMKDDAEQRVKTNLTLTAIADEENIEVSDEDIDKELEKMSEQFNISVEDIKSTLGNTDIVKNDVRIQKVIDLLRDNAKYVEATKED.

The region spanning 163-248 (GDTVNIDFSG…VNEIKFKDVP (86 aa)) is the PPIase FKBP-type domain.

It belongs to the FKBP-type PPIase family. Tig subfamily.

It localises to the cytoplasm. It carries out the reaction [protein]-peptidylproline (omega=180) = [protein]-peptidylproline (omega=0). Its function is as follows. Involved in protein export. Acts as a chaperone by maintaining the newly synthesized protein in an open conformation. Functions as a peptidyl-prolyl cis-trans isomerase. This Staphylococcus epidermidis (strain ATCC 35984 / DSM 28319 / BCRC 17069 / CCUG 31568 / BM 3577 / RP62A) protein is Trigger factor.